A 579-amino-acid chain; its full sequence is 2-isopropylmalate synthase (579 aa).

In terms of domain architecture, Pyruvate carboxyltransferase spans 40–314; the sequence is PRWCAVDLRD…DPMIDFSDID (275 aa). Asp49, His253, His255, and Asn289 together coordinate Mg(2+). Positions 456–579 are regulatory domain; the sequence is SSKEDGQWGR…VNRAIRDAQA (124 aa).

This sequence belongs to the alpha-IPM synthase/homocitrate synthase family. LeuA type 2 subfamily. In terms of assembly, homodimer. Mg(2+) serves as cofactor.

Its subcellular location is the cytoplasm. It catalyses the reaction 3-methyl-2-oxobutanoate + acetyl-CoA + H2O = (2S)-2-isopropylmalate + CoA + H(+). It participates in amino-acid biosynthesis; L-leucine biosynthesis; L-leucine from 3-methyl-2-oxobutanoate: step 1/4. In terms of biological role, catalyzes the condensation of the acetyl group of acetyl-CoA with 3-methyl-2-oxobutanoate (2-ketoisovalerate) to form 3-carboxy-3-hydroxy-4-methylpentanoate (2-isopropylmalate). This is 2-isopropylmalate synthase from Arthrobacter sp. (strain FB24).